The sequence spans 435 residues: Serine hydroxymethyltransferase (435 aa).

(6S)-5,6,7,8-tetrahydrofolate contacts are provided by residues Leu-133 and 137 to 139 (GHL). Lys-242 bears the N6-(pyridoxal phosphate)lysine mark.

It belongs to the SHMT family. As to quaternary structure, homodimer. The cofactor is pyridoxal 5'-phosphate.

Its subcellular location is the cytoplasm. The enzyme catalyses (6R)-5,10-methylene-5,6,7,8-tetrahydrofolate + glycine + H2O = (6S)-5,6,7,8-tetrahydrofolate + L-serine. It participates in one-carbon metabolism; tetrahydrofolate interconversion. It functions in the pathway amino-acid biosynthesis; glycine biosynthesis; glycine from L-serine: step 1/1. Its function is as follows. Catalyzes the reversible interconversion of serine and glycine with tetrahydrofolate (THF) serving as the one-carbon carrier. This reaction serves as the major source of one-carbon groups required for the biosynthesis of purines, thymidylate, methionine, and other important biomolecules. Also exhibits THF-independent aldolase activity toward beta-hydroxyamino acids, producing glycine and aldehydes, via a retro-aldol mechanism. In Sphingopyxis alaskensis (strain DSM 13593 / LMG 18877 / RB2256) (Sphingomonas alaskensis), this protein is Serine hydroxymethyltransferase.